An 880-amino-acid polypeptide reads, in one-letter code: Calcium-transporting ATPase lmo0841 (880 aa).

4 consecutive transmembrane segments (helical) span residues 47–67 (LWKLFLETFKDPMVIVLVIAA), 68–88 (LVQLVLGEVVESLIIFLVLIV), 243–263 (LGLGILALCVLIFAVEAGRVL), and 271–291 (MATAILNAFMFAVAVAVAAIP). Ca(2+)-binding residues include V287, A288, I290, and E292. Residue D334 is the 4-aspartylphosphate intermediate of the active site. 5 consecutive transmembrane segments (helical) span residues 681–701 (IAYLFAGNLGAIIAILFALVL), 707–727 (FTALQLLFINLVNDSLPAIAL), 756–776 (AVISRGVLIGIAVIISQYIGM), 819–839 (YVIGAVLLCFVLYGITVLPGA), and 854–874 (WSIAAGLALAAVVMMEIIKVV). Residues N716 and D720 each contribute to the Ca(2+) site.

The protein belongs to the cation transport ATPase (P-type) (TC 3.A.3) family. Type IIA subfamily.

The protein resides in the cell membrane. It catalyses the reaction Ca(2+)(in) + ATP + H2O = Ca(2+)(out) + ADP + phosphate + H(+). Phosphorylation is inhibited by EGTA and vanadate. ATPase activity is stimulated by Sr(2+). Inhibited by very high concentrations of cyclopiazonic acid (CPA). In terms of biological role, catalyzes the hydrolysis of ATP coupled with the transport of calcium. The transport is electrogenic with a probable ATP:Ca(2+):H(+) stoichiometry of 1:1:1. May have an important role in survival of the bacterium when stressed by a combination of a high calcium concentration and alkaline pH. The protein is Calcium-transporting ATPase lmo0841 of Listeria monocytogenes serovar 1/2a (strain ATCC BAA-679 / EGD-e).